The following is a 158-amino-acid chain: Ribosome maturation factor RimP (158 aa).

Belongs to the RimP family.

The protein resides in the cytoplasm. Its function is as follows. Required for maturation of 30S ribosomal subunits. The sequence is that of Ribosome maturation factor RimP from Streptococcus uberis (strain ATCC BAA-854 / 0140J).